The primary structure comprises 360 residues: 3-dehydroquinate synthase (360 aa).

NAD(+) contacts are provided by residues 71-76, 105-109, 129-130, K142, K151, and 169-172; these read DGEQYK, GVVGD, TT, and TLNT. Zn(2+)-binding residues include E184, H248, and H265.

It belongs to the sugar phosphate cyclases superfamily. Dehydroquinate synthase family. It depends on Co(2+) as a cofactor. Zn(2+) is required as a cofactor. NAD(+) serves as cofactor.

It localises to the cytoplasm. The enzyme catalyses 7-phospho-2-dehydro-3-deoxy-D-arabino-heptonate = 3-dehydroquinate + phosphate. Its pathway is metabolic intermediate biosynthesis; chorismate biosynthesis; chorismate from D-erythrose 4-phosphate and phosphoenolpyruvate: step 2/7. In terms of biological role, catalyzes the conversion of 3-deoxy-D-arabino-heptulosonate 7-phosphate (DAHP) to dehydroquinate (DHQ). The polypeptide is 3-dehydroquinate synthase (Coxiella burnetii (strain CbuK_Q154) (Coxiella burnetii (strain Q154))).